Reading from the N-terminus, the 663-residue chain is Beta-galactosidase YesZ (663 aa).

Arg-106 contributes to the substrate binding site. Cys-110 contacts Zn(2+). Asn-144 contributes to the substrate binding site. Glu-145 acts as the Proton donor in catalysis. Zn(2+) contacts are provided by Cys-153, Cys-155, and Cys-158. The active-site Nucleophile is the Glu-296. 345-348 (EISH) contacts substrate.

It belongs to the glycosyl hydrolase 42 family. In terms of assembly, homotrimer.

It carries out the reaction Hydrolysis of terminal non-reducing beta-D-galactose residues in beta-D-galactosides.. Its function is as follows. May play a role in the degradation of rhamnogalacturonan derived from plant cell walls. This chain is Beta-galactosidase YesZ (yesZ), found in Bacillus subtilis (strain 168).